Consider the following 859-residue polypeptide: Sulfate permease 1 (859 aa).

Residues N51 and N93 are each glycosylated (N-linked (GlcNAc...) asparagine). A run of 8 helical transmembrane segments spans residues 94–114, 116–136, 148–168, 173–193, 206–226, 234–254, 292–312, and 332–352; these read LTAK…KWFP, YNFT…CVLV, LSPE…SLFA, VCIG…AEVL, PIIA…LGIL, LISL…IIWG, FGLI…TFGI, and FYFY…TAIS. N-linked (GlcNAc...) asparagine glycosylation is found at N358 and N391. The next 4 helical transmembrane spans lie at 395 to 415, 428 to 448, 468 to 488, and 525 to 545; these read EIPA…KSFG, LIAI…PATG, VFTG…FFFI, and FIVT…YFAM. 3 N-linked (GlcNAc...) asparagine glycosylation sites follow: N630, N653, and N718. One can recognise an STAS domain in the interval 630–808; the sequence is NTTVRPPPPG…SIIAGHSSFH (179 aa).

The protein belongs to the SLC26A/SulP transporter (TC 2.A.53) family.

It localises to the membrane. Functionally, high affinity uptake of sulfate into the cell. The chain is Sulfate permease 1 (SUL1) from Saccharomyces cerevisiae (strain ATCC 204508 / S288c) (Baker's yeast).